The following is a 311-amino-acid chain: Cytochrome f (311 aa).

The signal sequence occupies residues 1 to 27 (MRRHLSLLIGSLVLGLSLLIAPAASWA). The heme site is built by Tyr28, Cys48, Cys51, and His52. A helical transmembrane segment spans residues 277-297 (IYGLLAFFAAVALAQIMLVLK).

This sequence belongs to the cytochrome f family. As to quaternary structure, the 4 large subunits of the cytochrome b6-f complex are cytochrome b6, subunit IV (17 kDa polypeptide, PetD), cytochrome f and the Rieske protein, while the 4 small subunits are PetG, PetL, PetM and PetN. The complex functions as a dimer. The cofactor is heme.

It localises to the cellular thylakoid membrane. Its function is as follows. Component of the cytochrome b6-f complex, which mediates electron transfer between photosystem II (PSII) and photosystem I (PSI), cyclic electron flow around PSI, and state transitions. The protein is Cytochrome f of Parasynechococcus marenigrum (strain WH8102).